Consider the following 51-residue polypeptide: Insulin (51 aa).

3 disulfide bridges follow: Cys-7/Cys-37, Cys-19/Cys-50, and Cys-36/Cys-41.

Belongs to the insulin family. Heterodimer of a B chain and an A chain linked by two disulfide bonds.

The protein resides in the secreted. Insulin decreases blood glucose concentration. It increases cell permeability to monosaccharides, amino acids and fatty acids. It accelerates glycolysis, the pentose phosphate cycle, and glycogen synthesis in liver. This chain is Insulin (INS), found in Hystrix cristata (North African crested porcupine).